We begin with the raw amino-acid sequence, 88 residues long: Large ribosomal subunit protein bL27 (88 aa).

The segment at 1 to 21 is disordered; the sequence is MAHKKGQGSTQNNRDSAGRRL.

The protein belongs to the bacterial ribosomal protein bL27 family.

The polypeptide is Large ribosomal subunit protein bL27 (Helicobacter pylori (strain P12)).